Consider the following 231-residue polypeptide: Eukaryotic translation initiation factor 4E-1 (231 aa).

EIF4G-binding regions lie at residues 56–59 (HPLE) and 66–102 (FDNSTTKSRQTAWGSSLRNLYTFSTVEDFWGAYNNIH). Residues 74-79 (RQTAWG), Lys-106, and 124-125 (WE) each bind mRNA. Cys-129 and Cys-167 are oxidised to a cystine. An EIF4G-binding region spans residues 150 to 159 (YTLLAMIGHQ). Residues 174–179 (RAKGEK) and 219–223 (KRLDR) contribute to the mRNA site.

Belongs to the eukaryotic initiation factor 4E family. In terms of assembly, EIF4F is a multi-subunit complex, the composition of which varies with external and internal environmental conditions. It is composed of at least EIF4A, EIF4E and EIF4G. EIF4E is also known to interact with other partners. In higher plants two isoforms of EIF4F have been identified, named isoform EIF4F and isoform EIF(iso)4F. Isoform EIF4F has subunits p220 and p26, whereas isoform EIF(iso)4F has subunits p82 and p28. (Microbial infection) Interacts with potyvirus viral genome-linked protein (VPg); this interaction is possible in susceptible hosts but impaired in resistant plants. Post-translationally, according to the redox status, the Cys-129-Cys-167 disulfide bridge may have a role in regulating protein function by affecting its ability to bind capped mRNA.

The protein localises to the nucleus. It is found in the cytoplasm. Component of the protein complex eIF4F, which is involved in the recognition of the mRNA cap, ATP-dependent unwinding of 5'-terminal secondary structure and recruitment of mRNA to the ribosome. Recognizes and binds the 7-methylguanosine-containing mRNA cap during an early step in the initiation of protein synthesis and facilitates ribosome binding by inducing the unwinding of the mRNAs secondary structures. Key component of recessive resistance to potyviruses. Its function is as follows. (Microbial infection) Susceptibility host factor required for viral infection (e.g. pepper mottle virus (PepMoV), potato virus Y (PVY) and tobacco etch virus (TEV)) by recruiting viral RNAs to the host ribosomal complex via an interaction with viral genome-linked protein (VPg). This Solanum habrochaites (Wild tomato) protein is Eukaryotic translation initiation factor 4E-1.